Consider the following 271-residue polypeptide: Tryptophan synthase alpha chain (271 aa).

Active-site proton acceptor residues include Glu-56 and Asp-67.

It belongs to the TrpA family. Tetramer of two alpha and two beta chains.

The enzyme catalyses (1S,2R)-1-C-(indol-3-yl)glycerol 3-phosphate + L-serine = D-glyceraldehyde 3-phosphate + L-tryptophan + H2O. It participates in amino-acid biosynthesis; L-tryptophan biosynthesis; L-tryptophan from chorismate: step 5/5. Functionally, the alpha subunit is responsible for the aldol cleavage of indoleglycerol phosphate to indole and glyceraldehyde 3-phosphate. The protein is Tryptophan synthase alpha chain of Mycolicibacterium paratuberculosis (strain ATCC BAA-968 / K-10) (Mycobacterium paratuberculosis).